We begin with the raw amino-acid sequence, 445 residues long: tRNA-2-methylthio-N(6)-dimethylallyladenosine synthase (445 aa).

An MTTase N-terminal domain is found at 2 to 117 (QGLYIKSYGC…LPELIVKARK (116 aa)). The [4Fe-4S] cluster site is built by Cys11, Cys47, Cys80, Cys157, Cys161, and Cys164. Residues 143-374 (KNQKVSAFIS…QELVHKQQLE (232 aa)) enclose the Radical SAM core domain. The 65-residue stretch at 377–441 (KKMIGETHPV…KNHLTGIIPH (65 aa)) folds into the TRAM domain.

It belongs to the methylthiotransferase family. MiaB subfamily. As to quaternary structure, monomer. [4Fe-4S] cluster is required as a cofactor.

It localises to the cytoplasm. It carries out the reaction N(6)-dimethylallyladenosine(37) in tRNA + (sulfur carrier)-SH + AH2 + 2 S-adenosyl-L-methionine = 2-methylsulfanyl-N(6)-dimethylallyladenosine(37) in tRNA + (sulfur carrier)-H + 5'-deoxyadenosine + L-methionine + A + S-adenosyl-L-homocysteine + 2 H(+). Functionally, catalyzes the methylthiolation of N6-(dimethylallyl)adenosine (i(6)A), leading to the formation of 2-methylthio-N6-(dimethylallyl)adenosine (ms(2)i(6)A) at position 37 in tRNAs that read codons beginning with uridine. The polypeptide is tRNA-2-methylthio-N(6)-dimethylallyladenosine synthase (Ehrlichia ruminantium (strain Gardel)).